Here is a 143-residue protein sequence, read N- to C-terminus: Hemoglobin subunit alpha-1 (143 aa).

Serine 2 bears the N-acetylserine mark. In terms of domain architecture, Globin spans 2–143 (SLSTKDKETV…VSLALAEKYR (142 aa)). An O2-binding site is contributed by histidine 60. Histidine 89 lines the heme b pocket.

The protein belongs to the globin family. In terms of assembly, hb1 is a heterotetramer of two alpha-1 chains and two beta-1 chains. Red blood cells.

Functionally, involved in oxygen transport from gills to the various peripheral tissues. The polypeptide is Hemoglobin subunit alpha-1 (Liparis tunicatus (Kelp snailfish)).